We begin with the raw amino-acid sequence, 314 residues long: Methionyl-tRNA formyltransferase (314 aa).

113-116 contributes to the (6S)-5,6,7,8-tetrahydrofolate binding site; sequence SLLP.

The protein belongs to the Fmt family.

The enzyme catalyses L-methionyl-tRNA(fMet) + (6R)-10-formyltetrahydrofolate = N-formyl-L-methionyl-tRNA(fMet) + (6S)-5,6,7,8-tetrahydrofolate + H(+). In terms of biological role, attaches a formyl group to the free amino group of methionyl-tRNA(fMet). The formyl group appears to play a dual role in the initiator identity of N-formylmethionyl-tRNA by promoting its recognition by IF2 and preventing the misappropriation of this tRNA by the elongation apparatus. This is Methionyl-tRNA formyltransferase from Pseudomonas syringae pv. tomato (strain ATCC BAA-871 / DC3000).